The chain runs to 257 residues: Protein MoaE (257 aa).

6–29 (VITGGGTGIGAACARLMHPAGERV) is a binding site for NAD(+). Residues 75–96 (LMSSSAAPAGWATAPPPRPATA) form a disordered region. Ser132 is a substrate binding site. The active-site Proton acceptor is the Tyr145.

The protein belongs to the short-chain dehydrogenases/reductases (SDR) family.

In terms of biological role, might catalyze the conversion of monoamine compounds or their metabolites. The protein is Protein MoaE (moaE) of Klebsiella aerogenes (Enterobacter aerogenes).